Consider the following 199-residue polypeptide: dITP/XTP pyrophosphatase (199 aa).

8 to 13 is a binding site for substrate; sequence TSNINK. The Proton acceptor role is filled by Asp68. Residue Asp68 participates in Mg(2+) binding. Substrate-binding positions include Ser69, 155–158, Lys177, and 182–183; these read FGYD and HR.

Belongs to the HAM1 NTPase family. Homodimer. Mg(2+) is required as a cofactor.

It carries out the reaction XTP + H2O = XMP + diphosphate + H(+). It catalyses the reaction dITP + H2O = dIMP + diphosphate + H(+). The enzyme catalyses ITP + H2O = IMP + diphosphate + H(+). Functionally, pyrophosphatase that catalyzes the hydrolysis of nucleoside triphosphates to their monophosphate derivatives, with a high preference for the non-canonical purine nucleotides XTP (xanthosine triphosphate), dITP (deoxyinosine triphosphate) and ITP. Seems to function as a house-cleaning enzyme that removes non-canonical purine nucleotides from the nucleotide pool, thus preventing their incorporation into DNA/RNA and avoiding chromosomal lesions. This chain is dITP/XTP pyrophosphatase, found in Borrelia duttonii (strain Ly).